The sequence spans 74 residues: Ferredoxin MycCII (74 aa).

The 4Fe-4S ferredoxin-type domain maps to 1 to 29 (MRIVLDAERCVGAGQCEATAPELFTQGDD). The [3Fe-4S] cluster site is built by Cys10, Cys16, and Cys54.

[3Fe-4S] cluster is required as a cofactor.

The protein operates within antibiotic biosynthesis; mycinamicin biosynthesis. Its function is as follows. Specific electron transport protein capable of effectively supporting cytochrome P450 MycCI activity in the biosynthesis of mycinamicin, a 16-membered macrolide antibiotic. This chain is Ferredoxin MycCII, found in Micromonospora griseorubida.